Consider the following 256-residue polypeptide: Trypsin, alkaline C (256 aa).

The N-terminal stretch at 1–17 (MRLFLALLALGFAAVAA) is a signal peptide. A propeptide spans 18–24 (VPANPQR) (activation peptide). Positions 25–256 (IVGGSTTTIQ…RYTSWISNNS (232 aa)) constitute a Peptidase S1 domain. Cys-55 and Cys-71 are disulfide-bonded. Residues His-70 and Asp-115 each act as charge relay system in the active site. Cystine bridges form between Cys-180-Cys-197 and Cys-209-Cys-233. Residue Ser-213 is the Charge relay system of the active site.

This sequence belongs to the peptidase S1 family. Midgut.

Its subcellular location is the secreted. It localises to the extracellular space. The catalysed reaction is Preferential cleavage: Arg-|-Xaa, Lys-|-Xaa.. The sequence is that of Trypsin, alkaline C from Manduca sexta (Tobacco hawkmoth).